A 121-amino-acid polypeptide reads, in one-letter code: Large ribosomal subunit protein bL20 (121 aa).

The protein belongs to the bacterial ribosomal protein bL20 family.

Binds directly to 23S ribosomal RNA and is necessary for the in vitro assembly process of the 50S ribosomal subunit. It is not involved in the protein synthesizing functions of that subunit. This chain is Large ribosomal subunit protein bL20, found in Petrotoga mobilis (strain DSM 10674 / SJ95).